Here is a 99-residue protein sequence, read N- to C-terminus: Aspartyl/glutamyl-tRNA(Asn/Gln) amidotransferase subunit C (99 aa).

This sequence belongs to the GatC family. As to quaternary structure, heterotrimer of A, B and C subunits.

The enzyme catalyses L-glutamyl-tRNA(Gln) + L-glutamine + ATP + H2O = L-glutaminyl-tRNA(Gln) + L-glutamate + ADP + phosphate + H(+). The catalysed reaction is L-aspartyl-tRNA(Asn) + L-glutamine + ATP + H2O = L-asparaginyl-tRNA(Asn) + L-glutamate + ADP + phosphate + 2 H(+). In terms of biological role, allows the formation of correctly charged Asn-tRNA(Asn) or Gln-tRNA(Gln) through the transamidation of misacylated Asp-tRNA(Asn) or Glu-tRNA(Gln) in organisms which lack either or both of asparaginyl-tRNA or glutaminyl-tRNA synthetases. The reaction takes place in the presence of glutamine and ATP through an activated phospho-Asp-tRNA(Asn) or phospho-Glu-tRNA(Gln). This Burkholderia thailandensis (strain ATCC 700388 / DSM 13276 / CCUG 48851 / CIP 106301 / E264) protein is Aspartyl/glutamyl-tRNA(Asn/Gln) amidotransferase subunit C.